Here is a 114-residue protein sequence, read N- to C-terminus: Transmembrane protein 14B (114 aa).

Transmembrane regions (helical) follow at residues 8 to 28 (LVPLHWFGFGYTALVVSGGIV), 34 to 54 (GSVPSLAAGLLFGSLAGLGAY), 60 to 80 (PRNVWGFLAATSVTFVGVMGM), and 83 to 103 (YYYGKFMPVGLIAGASLLMAA).

This sequence belongs to the TMEM14 family. Interacts with IQGAP1; this interaction promotes phosphorylation and nuclear translocation of IQGAP1. Mainly expressed in the outer subventricular zone (OSVZ) of the fetal brains.

Its subcellular location is the membrane. Primate-specific protein involved in cortical expansion and folding in the developing neocortex. May drive neural progenitor proliferation through nuclear translocation of IQGAP1, which in turn promotes G1/S cell cycle transitions. The sequence is that of Transmembrane protein 14B (TMEM14B) from Homo sapiens (Human).